The following is a 141-amino-acid chain: Hemoglobin subunit alpha (141 aa).

Residues 1 to 141 (VLSPADKSNV…VSTVLTSKYR (141 aa)) form the Globin domain. Position 3 is a phosphoserine (serine 3). An N6-succinyllysine mark is found at lysine 7 and lysine 11. The residue at position 16 (lysine 16) is an N6-acetyllysine; alternate. Lysine 16 is modified (N6-succinyllysine; alternate). Tyrosine 24 is modified (phosphotyrosine). Phosphoserine is present on serine 35. At lysine 40 the chain carries N6-succinyllysine. The residue at position 49 (serine 49) is a Phosphoserine. Histidine 58 contributes to the O2 binding site. A heme b-binding site is contributed by histidine 87. Serine 102 bears the Phosphoserine mark. Position 108 is a phosphothreonine (threonine 108). 2 positions are modified to phosphoserine: serine 124 and serine 131. Phosphothreonine occurs at positions 134 and 137. Serine 138 is modified (phosphoserine).

It belongs to the globin family. Heterotetramer of two alpha chains and two beta chains. In terms of tissue distribution, red blood cells.

Functionally, involved in oxygen transport from the lung to the various peripheral tissues. Its function is as follows. Hemopressin acts as an antagonist peptide of the cannabinoid receptor CNR1. Hemopressin-binding efficiently blocks cannabinoid receptor CNR1 and subsequent signaling. The protein is Hemoglobin subunit alpha (HBA) of Saguinus mystax (Moustached tamarin).